A 457-amino-acid polypeptide reads, in one-letter code: Probable cytosolic Fe-S cluster assembly factor oxy-4 (457 aa).

Cys-25 contacts [4Fe-4S] cluster. Positions 38–59 (KEESQVNIRTKKPKDKESSKTE) are disordered. Residues Cys-71, Cys-74, Cys-77, Cys-176, Cys-232, Cys-380, and Cys-384 each coordinate [4Fe-4S] cluster.

The protein belongs to the NARF family.

In terms of biological role, component of the cytosolic iron-sulfur (Fe/S) protein assembly machinery. Required for maturation of extramitochondrial Fe/S proteins. This Caenorhabditis elegans protein is Probable cytosolic Fe-S cluster assembly factor oxy-4 (oxy-4).